A 1906-amino-acid polypeptide reads, in one-letter code: Retinoic acid-induced protein 1 (1906 aa).

6 disordered regions span residues 1 to 261 (MQSF…APGQ), 273 to 299 (RLSYDQQQQQQQQQQQQQQALQSRHHA), 335 to 370 (YQTFSPSSSHSPARSVGRSPSYSSTPSPLMPNLENF), 469 to 520 (VSRT…YLSG), 538 to 571 (SPARVNSNSKAKPESVSTCSVTSPDDMSTKSDDS), and 656 to 712 (SAWP…GTKP). The span at 13 to 24 (KQQNYQQTSQET) shows a compositional bias: polar residues. Over residues 66–75 (PSGTAAAVAA) the composition is skewed to low complexity. Positions 124–134 (PQPPPPQPQPL) are enriched in pro residues. Over residues 213–226 (SQSFPTSSTYSSSV) the composition is skewed to low complexity. Residues 252–261 (TASSSLAPGQ) show a composition bias toward polar residues. Low complexity-rich tracts occupy residues 278 to 291 (QQQQQQQQQQQQQQ) and 339 to 353 (SPSSSHSPARSVGRS). 2 positions are modified to phosphoserine: Ser339 and Ser345. Phosphothreonine is present on Thr472. Residues 541–563 (RVNSNSKAKPESVSTCSVTSPDD) show a composition bias toward polar residues. Residues Ser568 and Ser683 each carry the phosphoserine modification. Thr696 is modified (phosphothreonine). Residue Ser805 is modified to Phosphoserine. A Glycyl lysine isopeptide (Lys-Gly) (interchain with G-Cter in SUMO2) cross-link involves residue Lys811. Residue Lys819 forms a Glycyl lysine isopeptide (Lys-Gly) (interchain with G-Cter in SUMO1) linkage. Phosphoserine occurs at positions 880 and 892. Lys901 is covalently cross-linked (Glycyl lysine isopeptide (Lys-Gly) (interchain with G-Cter in SUMO1); alternate). Residue Lys901 forms a Glycyl lysine isopeptide (Lys-Gly) (interchain with G-Cter in SUMO2); alternate linkage. Residues 937-947 (KVQSWFESSLS) are compositionally biased toward polar residues. Disordered stretches follow at residues 937–1299 (KVQS…ETPD), 1344–1570 (FACK…PLDP), 1613–1637 (VVNSPGDAPKPHRKPSSSASSSSSS), 1746–1775 (AAAATAGKPPRPDGPADPAKQGPLRTSARG), and 1794–1819 (EEAAPADKGRKHECSKEAPAEPGGEA). Residues 950 to 962 (KPGEEGPDGERAP) are compositionally biased toward basic and acidic residues. Positions 996–1005 (KSLRSRRVHR) are enriched in basic residues. The residue at position 1064 (Ser1064) is a Phosphoserine. Position 1068 is a phosphothreonine (Thr1068). The span at 1101-1119 (PSPKAASSPSNPAALPVAS) shows a compositional bias: low complexity. Ser1122 is subject to Phosphoserine. 2 short sequence motifs (nuclear localization signal) span residues 1160 to 1177 (RRRPSEGRLPNCRATKKL) and 1223 to 1240 (KRKSAFMAPVPTKKRNLV). A compositionally biased stretch (low complexity) spans 1242–1252 (RSRSSSSSNAS). Phosphoserine occurs at positions 1352, 1358, and 1374. Lys1425 is covalently cross-linked (Glycyl lysine isopeptide (Lys-Gly) (interchain with G-Cter in SUMO2)). Ser1431 carries the phosphoserine modification. Residues 1444 to 1453 (PKKRSRKGRA) show a composition bias toward basic residues. Composition is skewed to polar residues over residues 1482-1491 (SGTQGASEDN) and 1517-1534 (QPQTRAQKQPGHTNYSSY). Over residues 1535 to 1545 (SKRKRLTRGRA) the composition is skewed to basic residues. Over residues 1628 to 1637 (SSSASSSSSS) the composition is skewed to low complexity. The segment at 1780–1835 (LQSCYCCDGREDGGEEAAPADKGRKHECSKEAPAEPGGEAQEHWVHEACAVWTGGV) adopts a C2HC pre-PHD-type zinc-finger fold. Over residues 1798 to 1812 (PADKGRKHECSKEAP) the composition is skewed to basic and acidic residues. The segment at 1855-1903 (MMCSSCQEAGATIGCCHKGCLHTYHYPCASDAGCIFIEENFSLKCPKHK) adopts a PHD-type zinc-finger fold.

As to expression, expressed in all tissues examined with higher expression in the heart and brain. No expression was seen in the corpus callosum of the brain.

It localises to the cytoplasm. It is found in the nucleus. Its function is as follows. Transcriptional regulator of the circadian clock components: CLOCK, BMAL1, BMAL2, PER1/3, CRY1/2, NR1D1/2 and RORA/C. Positively regulates the transcriptional activity of CLOCK a core component of the circadian clock. Regulates transcription through chromatin remodeling by interacting with other proteins in chromatin as well as proteins in the basic transcriptional machinery. May be important for embryonic and postnatal development. May be involved in neuronal differentiation. The polypeptide is Retinoic acid-induced protein 1 (RAI1) (Homo sapiens (Human)).